The chain runs to 446 residues: Lysine histidine transporter 1 (446 aa).

Residues 1 to 37 are Cytoplasmic-facing; it reads MVAQAPHDDHQDDEKLAAARQKEIEDWLPITSSRNAK. A helical membrane pass occupies residues 38–58; that stretch reads WWYSAFHNVTAMVGAGVLGLP. Residues 59–63 lie on the Extracellular side of the membrane; that stretch reads YAMSQ. The chain crosses the membrane as a helical span at residues 64–84; it reads LGWGPGIAVLVLSWVITLYTL. Topologically, residues 85-115 are cytoplasmic; that stretch reads WQMVEMHEMVPGKRFDRYHELGQHAFGEKLG. Residues 116–136 form a helical membrane-spanning segment; that stretch reads LYIVVPQQLIVEIGVCIVYMV. Over 137–157 the chain is Extracellular; it reads TGGKSLKKFHELVCDDCKPIK. A helical transmembrane segment spans residues 158 to 178; that stretch reads LTYFIMIFASVHFVLSHLPNF. At 179–180 the chain is on the cytoplasmic side; sequence NS. A helical transmembrane segment spans residues 181–201; sequence ISGVSLAAAVMSLSYSTIAWA. At 202 to 227 the chain is on the extracellular side; the sequence is SSASKGVQEDVQYGYKAKTTAGTVFN. Residues 228–248 form a helical membrane-spanning segment; that stretch reads FFSGLGDVAFAYAGHNVVLEI. At 249–268 the chain is on the cytoplasmic side; the sequence is QATIPSTPEKPSKGPMWRGV. Residues 269–289 traverse the membrane as a helical segment; sequence IVAYIVVALCYFPVALVGYYI. Topologically, residues 290–305 are extracellular; sequence FGNGVEDNILMSLKKP. A helical membrane pass occupies residues 306–326; sequence AWLIATANIFVVIHVIGSYQI. At 327 to 352 the chain is on the cytoplasmic side; it reads YAMPVFDMMETLLVKKLNFRPTTTLR. The helical transmembrane segment at 353-375 threads the bilayer; the sequence is FFVRNFYVAATMFVGMTFPFFGG. The Extracellular portion of the chain corresponds to 376 to 378; sequence LLA. A helical membrane pass occupies residues 379–401; it reads FFGGFAFAPTTYFLPCVIWLAIY. Over 402-409 the chain is Cytoplasmic; the sequence is KPKKYSLS. The chain crosses the membrane as a helical span at residues 410 to 430; the sequence is WWANWVCIVFGLFLMVLSPIG. Over 431-446 the chain is Extracellular; sequence GLRTIVIQAKGYKFYS.

It belongs to the amino acid/polyamine transporter 2 family. Amino acid/auxin permease (AAAP) (TC 2.A.18.2) subfamily. In terms of tissue distribution, expressed in roots, stems, flowers, leaves, siliques and pollen. Found in the tips of roots and in the rhizodermis of emerging roots and in lateral roots. Higher expression in older leaves as compared to joung leaves. Detected first at the hydathodes, then in the epidermis and finally in matures leaves in all mesophyll cells. Not detected in vascular bundles or in seeds.

It is found in the cell membrane. Inhibited by carbonlycyanide m-chlorophenylhydrazone (CCCP) and DEPC. Amino acid-proton symporter. Transporter with a broad specificity for histidine, lysine, glutamic acid, alanine, serine, proline and glycine. Involved in both apoplastic transport of amino acids in leaves and their uptake by roots. In Arabidopsis thaliana (Mouse-ear cress), this protein is Lysine histidine transporter 1 (LHT1).